Here is a 62-residue protein sequence, read N- to C-terminus: MATKVKFKYKGEEKEVDISKIKKVWRVGKMISFTYDDNGKTGRGAVSEKDAPKELLDKLEKK.

Belongs to the 7 kDa DNA-binding/endoribonuclease P2 family. Monomer.

It is found in the cytoplasm. In terms of biological role, can constrain negative DNA supercoils. May be involved in maintaining the integrity of the genome at high temperature. The chain is DNA-binding protein 7b from Acidianus hospitalis (strain W1).